A 368-amino-acid chain; its full sequence is Reverse transcriptase-like protein (368 aa).

The Reverse transcriptase domain maps to 91 to 318 (TRELTVPYWY…SELNWLGHKV (228 aa)).

It localises to the mitochondrion. The sequence is that of Reverse transcriptase-like protein (RTL) from Chlamydomonas reinhardtii (Chlamydomonas smithii).